The sequence spans 981 residues: Amidohydrolase tasK (981 aa).

The tract at residues 1-36 is disordered; it reads MDDQKGPLPPYTPTATAPPPASMRQRRPPGRRRALR. Residues 7 to 21 are compositionally biased toward pro residues; that stretch reads PLPPYTPTATAPPPA. Residues 24 to 36 show a composition bias toward basic residues; the sequence is RQRRPPGRRRALR. Residues 40–57 traverse the membrane as a helical segment; it reads TVRVLALACLAFVVLAQW. A disordered region spans residues 86-107; it reads LRVRPQDPAGPGRSKNDRYLDG. The Fe(2+) site is built by H187 and H189. Zn(2+) is bound by residues H187 and H189. N407 carries N-linked (GlcNAc...) asparagine glycosylation. The segment at 819–838 is disordered; that stretch reads KKQQKQQQQQQQQQQQQHGT. A compositionally biased stretch (low complexity) spans 823 to 835; sequence KQQQQQQQQQQQQ. N891 is a glycosylation site (N-linked (GlcNAc...) asparagine).

Belongs to the metallo-dependent hydrolases superfamily. Fe(2+) is required as a cofactor. The cofactor is Mn(2+). Requires Zn(2+) as cofactor.

It is found in the membrane. Amidohydrolase; part of the gene cluster that mediates the biosynthesis of the tetramic acids Sch210971 and Sch210972, potential anti-HIV fungal natural product that contain a decalin core. The PKS module of tasS together with the enoylreductase tasC catalyze the formation of the polyketide unit which is then conjugated to 4-hydroxyl-4-methyl glutamate (HMG) by the condensation domain of the tasS NRPS module. One unique structural feature of Sch210971 and Sch210972 is the tetramic acid motif proposed to be derived from the non-proteinogenic amino acid HMG, by a Dieckmann-type condensation catalyzed by the reductase domain of tasS. The aldolase tasA catalyzes the aldol condensation of 2 molecules of pyruvic acid to yield the intermediate 4-hydroxyl-4-methyl-2-oxoglutarate (HMOG), which can then be stereoselectively transaminated, may be by tasG, to form HMG. The Diels-Alderase tas3 then uses the Dieckmann product of tasS as substrate and catalyzes the Diels-Alder cycloaddition to form the decalin ring of Sch210971 and Sch210972. In Hapsidospora irregularis, this protein is Amidohydrolase tasK.